The chain runs to 681 residues: MLPEFTPVNNLTTQMAQQEIATLQKRLTDYGVAYYEEDAPLVEDYIYDAFYARLVLLEAQFPQFVTPDSPTQNVGGAKVKSGLAKVVHPAPMLSLGDVFSLEELQEWDERTTKTLGFQSEYNLELKIDGLAVALTYVDGKLVQASTRGNGSIGEDVTANVKTIRSIPQTLTEPITIEVRGEIYMPKSSFATLNKQREADGLEPFANPRNAAAGSLRQLNVAITKKRELSAFVYYTADPDAIGVTTQSGALERFAALGLPTDDHNRVIATMADIDAYIAEYTSQRERLAYGIDGVVVKVNQLDNQLDLGHTVKIPRWAIAYKFPPEEALTVVRDIEWTVGRTGAVTPTAVMDPVQLAGTTVQRASLHNPDYLNAKDIRIGDTVTLHKAGDIIPEIGQVLLAERPANNQVYDIPTFCPACHSELVHLDGEVALRCINPFCVAQIQEKLTHFASRNAMNIDGMGPRVVSQLLKANYIQDVASIYRLQETQLLSLDKFKEKSVTNLLSAITTSKSNSLERLLFGLGIRMVGAKAARLIAEKFKTLQAIADASVIDIASIAGIGETIALSVVQYFKTPEAKQLLIELQEAGVNQTYLSDVIVDETSFFYGKKIVLTGKLEKGSRTEATKWLQDHGAQVTGSVSAKTDLLIAGEDAGSKLDKANALGVTVWDEQAFIEAQAKEGTDK.

NAD(+) contacts are provided by residues 44–48, 94–95, and Glu124; these read DYIYD and SL. The N6-AMP-lysine intermediate role is filled by Lys126. NAD(+) is bound by residues Arg147, Glu181, Lys297, and Lys321. Residues Cys415, Cys418, Cys433, and Cys438 each coordinate Zn(2+). Positions 598-681 constitute a BRCT domain; the sequence is DETSFFYGKK…EAQAKEGTDK (84 aa).

This sequence belongs to the NAD-dependent DNA ligase family. LigA subfamily. Requires Mg(2+) as cofactor. It depends on Mn(2+) as a cofactor.

The catalysed reaction is NAD(+) + (deoxyribonucleotide)n-3'-hydroxyl + 5'-phospho-(deoxyribonucleotide)m = (deoxyribonucleotide)n+m + AMP + beta-nicotinamide D-nucleotide.. In terms of biological role, DNA ligase that catalyzes the formation of phosphodiester linkages between 5'-phosphoryl and 3'-hydroxyl groups in double-stranded DNA using NAD as a coenzyme and as the energy source for the reaction. It is essential for DNA replication and repair of damaged DNA. This Leuconostoc citreum (strain KM20) protein is DNA ligase.